An 878-amino-acid chain; its full sequence is MKNLCWVFLSLFWFGVFLIIRFAEGQNQEGFISLDCGLPLNEPPYIESETGIQFSSDENFIQSGKTGRIPKNLESENLKQYATLRYFPDGIRNCYDLRVEEGRNYLIRATFFYGNFDGLNVSPEFDMHIGPNKWTTIDLQIVPDGTVKEIIHIPRSNSLQICLVKTGATIPMISALELRPLANDTYIAKSGSLKYYFRMYLSNATVLLRYPKDVYDRSWVPYIQPEWNQISTTSNVSNKNHYDPPQVALKMAATPTNLDAALTMVWRLENPDDQIYLYMHFSEIQVLKANDTREFDIILNGETINTRGVTPKYLEIMTWLTTNPRQCNGGICRMQLTKTQKSTLPPLLNAFEVYSVLQLPQSQTNEIEVVAIKNIRTTYGLSRISWQGDPCVPKQFLWDGLNCNITDISAPPRIISLNLSSSGLSGTIVSNFQNLAHLESLDLSNNSLSGIVPEFLATMKSLLVINLSGNKLSGAIPQALRDREREGLKLNVLGNKELCLSSTCIDKPKKKVAVKVVAPVASIAAIVVVILLFVFKKKMSSRNKPEPWIKTKKKRFTYSEVMEMTKNLQRPLGEGGFGVVYHGDLNGSEQVAVKLLSQTSAQGYKEFKAEVELLLRVHHINLVNLVGYCDEQDHFALIYEYMSNGDLHQHLSGKHGGSVLNWGTRLQIAIEAALGLEYLHTGCKPAMVHRDVKSTNILLDEEFKAKIADFGLSRSFQVGGDQSQVSTVVAGTLGYLDPEYYLTSELSEKSDVYSFGILLLEIITNQRVIDQTRENPNIAEWVTFVIKKGDTSQIVDPKLHGNYDTHSVWRALEVAMSCANPSSVKRPNMSQVIINLKECLASENTRISRNNQNMDSGHSSDQLNVTVTFDTDVKPKAR.

An N-terminal signal peptide occupies residues 1–25 (MKNLCWVFLSLFWFGVFLIIRFAEG). At 26-514 (QNQEGFISLD…IDKPKKKVAV (489 aa)) the chain is on the extracellular side. N-linked (GlcNAc...) asparagine glycans are attached at residues Asn-183, Asn-203, Asn-235, Asn-290, Asn-404, Asn-418, Asn-445, and Asn-466. 3 LRR repeats span residues 413–436 (RIISLNLSSSGLSGTIVSNFQNLA), 437–458 (HLESLDLSNNSLSGIVPEFLAT), and 461–483 (SLLVINLSGNKLSGAIPQALRDR). A helical transmembrane segment spans residues 515-535 (KVVAPVASIAAIVVVILLFVF). The Cytoplasmic portion of the chain corresponds to 536–878 (KKKMSSRNKP…FDTDVKPKAR (343 aa)). Position 557 is a phosphothreonine (Thr-557). A Protein kinase domain is found at 566-840 (KNLQRPLGEG…QVIINLKECL (275 aa)). ATP contacts are provided by residues 572–580 (LGEGGFGVV) and Lys-594. Phosphotyrosine is present on Tyr-639. Asp-691 (proton acceptor) is an active-site residue. Ser-726 bears the Phosphoserine mark. Residues Thr-727 and Thr-732 each carry the phosphothreonine modification. The residue at position 740 (Tyr-740) is a Phosphotyrosine. Residues 849 to 869 (RNNQNMDSGHSSDQLNVTVTF) are compositionally biased toward polar residues. Positions 849–878 (RNNQNMDSGHSSDQLNVTVTFDTDVKPKAR) are disordered.

It belongs to the protein kinase superfamily. Ser/Thr protein kinase family.

Its subcellular location is the membrane. The catalysed reaction is L-seryl-[protein] + ATP = O-phospho-L-seryl-[protein] + ADP + H(+). It carries out the reaction L-threonyl-[protein] + ATP = O-phospho-L-threonyl-[protein] + ADP + H(+). Its function is as follows. Receptor-like serine/threonine-kinase required during the endosperm development in seeds. The polypeptide is Probable LRR receptor-like serine/threonine-protein kinase MEE39 (MEE39) (Arabidopsis thaliana (Mouse-ear cress)).